Here is a 116-residue protein sequence, read N- to C-terminus: Large ribosomal subunit protein bL17 (116 aa).

This sequence belongs to the bacterial ribosomal protein bL17 family. Part of the 50S ribosomal subunit. Contacts protein L32.

This Acaryochloris marina (strain MBIC 11017) protein is Large ribosomal subunit protein bL17.